The following is a 276-amino-acid chain: Vitamin B12-binding protein (276 aa).

Residues 1 to 20 form the signal peptide; the sequence is MLVIRLIACTFLFITPSLLA. Positions 27–274 constitute a Fe/B12 periplasmic-binding domain; that stretch reads RIISLAPHAT…QVCTYLKIAQ (248 aa). Position 54 (Y54) interacts with cyanocob(III)alamin. A disulfide bond links C187 and C267.

This sequence belongs to the BtuF family. In terms of assembly, the complex is composed of two ATP-binding proteins (BtuD), two transmembrane proteins (BtuC) and a solute-binding protein (BtuF).

Its subcellular location is the periplasm. Part of the ABC transporter complex BtuCDF involved in vitamin B12 import. Binds vitamin B12 and delivers it to the periplasmic surface of BtuC. In Vibrio cholerae serotype O1 (strain ATCC 39541 / Classical Ogawa 395 / O395), this protein is Vitamin B12-binding protein.